The primary structure comprises 471 residues: Citrate synthase, mitochondrial (471 aa).

The transit peptide at 1–18 (MASLRSATALSRLRSRAG) directs the protein to the mitochondrion. Active-site residues include H307, H353, and D408.

Belongs to the citrate synthase family. Homodimer.

It localises to the mitochondrion matrix. It carries out the reaction oxaloacetate + acetyl-CoA + H2O = citrate + CoA + H(+). It functions in the pathway carbohydrate metabolism; tricarboxylic acid cycle; isocitrate from oxaloacetate: step 1/2. The protein is Citrate synthase, mitochondrial (CIT) of Citrus maxima (Pomelo).